The sequence spans 114 residues: MAAIPSSGSLVATHDYYRRRLGSTSSNSSCSSTECPGEAIPHPPGLPKADPGHWWASFFFGKSTLPFMATVLESAEHSEPPQASSSMTACGLARDAPRKQPGGQSSTASAGPPS.

Serine 9 is subject to Phosphoserine. Disordered regions lie at residues 22 to 47 (GSTSSNSSCSSTECPGEAIPHPPGLP) and 75 to 114 (AEHSEPPQASSSMTACGLARDAPRKQPGGQSSTASAGPPS). Positions 23–33 (STSSNSSCSST) are enriched in low complexity. The span at 102-114 (GGQSSTASAGPPS) shows a compositional bias: polar residues.

This sequence belongs to the PPDPF family.

Probable regulator of exocrine pancreas development. The chain is Pancreatic progenitor cell differentiation and proliferation factor (PPDPF) from Homo sapiens (Human).